Consider the following 317-residue polypeptide: Transcription factor elt-3 (317 aa).

The tract at residues 1–34 (METANYYLPSPPYSSTSSSDSRESRMNTPIPTTY) is disordered. The GATA-type zinc finger occupies 244-268 (CSNCKTRETTLWRRNGEGGVECNAC). The interval 290-317 (KRNRRPRNESPNSAIRNTHQRHGHAAAC) is disordered. The segment covering 307–317 (THQRHGHAAAC) has biased composition (basic residues).

Interacts with skn-1; interaction may enhance transcriptional activation of target genes. As to expression, expressed in head, trunk and tail. Expression decreases with age in the hypodermal cells and the pharyngeal-intestinal valve cells in the head, eventually showing little or no expression in about 14 day old worms. Expressed in hypodermal, but not in intestinal, cells at 1 day of age. Expression in the hypodermal and intestinal cells in the trunk region decreases quickly between day 3 and day 5 of adulthood. Expression in the tail between days 3 and 14 stays approximately uniform.

The protein resides in the nucleus. Transcription factor. Required, in concert with signal transducer and transcription factor sta-2, for up-regulation of the vacuolar H(+)-ATPase and acceleration of lysosome maturation at molt. Involved in regulating hypodermal development, perhaps acting downstream of transcription factor elt-1. Modulates environmentally induced changes in collagen gene expression, including rol-6, sqt-1, lon-3, and dpy-13. Involved in regulating expression of various genes, including gst-4, sod-3, ugt-9, and col-144. In response to oxidative stress, required to up-regulate expression of gst-4 mRNA. Regulated by the Insulin/IGF-1-like signaling (IIS) mediated pathway. Plays a role in longevity. May regulate the expression of genes that control sensitivity to osmotic stress, in conjunction with the GATA region-binding transcription factor elt-2. May form a transcriptional circuit with GATA factors egl-18 and elt-6. This Caenorhabditis elegans protein is Transcription factor elt-3.